A 66-amino-acid polypeptide reads, in one-letter code: Large ribosomal subunit protein bL35 (66 aa).

This sequence belongs to the bacterial ribosomal protein bL35 family.

The chain is Large ribosomal subunit protein bL35 from Thermomicrobium roseum (strain ATCC 27502 / DSM 5159 / P-2).